Here is a 139-residue protein sequence, read N- to C-terminus: ATP synthase epsilon chain (139 aa).

The protein belongs to the ATPase epsilon chain family. F-type ATPases have 2 components, CF(1) - the catalytic core - and CF(0) - the membrane proton channel. CF(1) has five subunits: alpha(3), beta(3), gamma(1), delta(1), epsilon(1). CF(0) has three main subunits: a, b and c.

Its subcellular location is the cell inner membrane. In terms of biological role, produces ATP from ADP in the presence of a proton gradient across the membrane. This is ATP synthase epsilon chain from Pseudomonas putida (strain ATCC 700007 / DSM 6899 / JCM 31910 / BCRC 17059 / LMG 24140 / F1).